The sequence spans 36 residues: VDKRRPIWVMLLSSYWQDGNSLGVDAIMTNYPEDVK.

Belongs to the arthropod phospholipase D family. Class II subfamily. It depends on Mg(2+) as a cofactor. In terms of processing, contains 2 disulfide bonds. As to expression, expressed by the venom gland.

The protein resides in the secreted. The catalysed reaction is an N-(acyl)-sphingosylphosphocholine = an N-(acyl)-sphingosyl-1,3-cyclic phosphate + choline. It catalyses the reaction an N-(acyl)-sphingosylphosphoethanolamine = an N-(acyl)-sphingosyl-1,3-cyclic phosphate + ethanolamine. The enzyme catalyses a 1-acyl-sn-glycero-3-phosphocholine = a 1-acyl-sn-glycero-2,3-cyclic phosphate + choline. It carries out the reaction a 1-acyl-sn-glycero-3-phosphoethanolamine = a 1-acyl-sn-glycero-2,3-cyclic phosphate + ethanolamine. Its function is as follows. Dermonecrotic toxins cleave the phosphodiester linkage between the phosphate and headgroup of certain phospholipids (sphingolipid and lysolipid substrates), forming an alcohol (often choline) and a cyclic phosphate. This toxin acts on sphingomyelin (SM). It may also act on ceramide phosphoethanolamine (CPE), lysophosphatidylcholine (LPC) and lysophosphatidylethanolamine (LPE), but not on lysophosphatidylserine (LPS), and lysophosphatidylglycerol (LPG). It acts by transphosphatidylation, releasing exclusively cyclic phosphate products as second products. Induces dermonecrosis, hemolysis, increased vascular permeability, edema, inflammatory response, and platelet aggregation. The sequence is that of Dermonecrotic toxin LgSicTox-beta-LOXN2 from Loxosceles gaucho (Spider).